Consider the following 209-residue polypeptide: Imidazole glycerol phosphate synthase subunit HisH (209 aa).

The 205-residue stretch at 1 to 205 (MIAIIDYGMG…QGVVEAWKSS (205 aa)) folds into the Glutamine amidotransferase type-1 domain. Residue Cys-79 is the Nucleophile of the active site. Residues His-180 and Glu-182 contribute to the active site.

In terms of assembly, heterodimer of HisH and HisF.

It is found in the cytoplasm. It catalyses the reaction 5-[(5-phospho-1-deoxy-D-ribulos-1-ylimino)methylamino]-1-(5-phospho-beta-D-ribosyl)imidazole-4-carboxamide + L-glutamine = D-erythro-1-(imidazol-4-yl)glycerol 3-phosphate + 5-amino-1-(5-phospho-beta-D-ribosyl)imidazole-4-carboxamide + L-glutamate + H(+). The enzyme catalyses L-glutamine + H2O = L-glutamate + NH4(+). Its pathway is amino-acid biosynthesis; L-histidine biosynthesis; L-histidine from 5-phospho-alpha-D-ribose 1-diphosphate: step 5/9. IGPS catalyzes the conversion of PRFAR and glutamine to IGP, AICAR and glutamate. The HisH subunit catalyzes the hydrolysis of glutamine to glutamate and ammonia as part of the synthesis of IGP and AICAR. The resulting ammonia molecule is channeled to the active site of HisF. The protein is Imidazole glycerol phosphate synthase subunit HisH of Bacillus cereus (strain G9842).